The sequence spans 862 residues: Rab GTPase-binding effector protein 1 (862 aa).

N-acetylalanine is present on Ala2. Residues 11 to 328 (DVSLQQRVAE…KDQEEDEQQR (318 aa)) are a coiled coil. Lys282 carries the N6-acetyllysine modification. Disordered regions lie at residues 315–340 (ELKKKDQEEDEQQRINKGKDNKKIDT) and 355–374 (EESSTPLSNEEEHLDSTHGS). Phosphoserine is present on residues Ser374, Ser377, and Ser407. Thr408 carries the phosphothreonine modification. Ser410 carries the phosphoserine modification. The stretch at 534 to 816 (DMCSNYEKQL…LQTELDVSEQ (283 aa)) forms a coiled coil.

The protein belongs to the rabaptin family. As to quaternary structure, heterodimer with RABGEF1. The heterodimer binds RAB4A and RAB5A that have been activated by GTP-binding. Interacts with TSC2. Interacts with GGA1 (via GAE domain), GGA2 (via GAE domain) and GGA3 (via GAE domain). Interacts with AP1G1 (via GAE domain). Interacts with AP1G2 (via GAE domain). Interacts with ECPAS. Interacts with KCNH1. Interacts with PKD1 (via C-terminal domain) and GGA1; the interactions recruit PKD1:PKD2 complex to GGA1 and ARL3 at trans-Golgi network. Interacts with KCNH1. In terms of processing, proteolytic cleavage by caspases in apoptotic cells causes loss of endosome fusion activity.

It is found in the cytoplasm. The protein resides in the early endosome. Its subcellular location is the recycling endosome. It localises to the cytoplasmic vesicle. Rab effector protein acting as linker between gamma-adaptin, RAB4A and RAB5A. Involved in endocytic membrane fusion and membrane trafficking of recycling endosomes. Involved in KCNH1 channels trafficking to and from the cell membrane. Stimulates RABGEF1 mediated nucleotide exchange on RAB5A. Mediates the traffic of PKD1:PKD2 complex from the endoplasmic reticulum through the Golgi to the cilium. In Rattus norvegicus (Rat), this protein is Rab GTPase-binding effector protein 1 (Rabep1).